Reading from the N-terminus, the 505-residue chain is ATP synthase subunit alpha, chloroplastic (505 aa).

172 to 179 (GDRQTGKT) is a binding site for ATP.

This sequence belongs to the ATPase alpha/beta chains family. F-type ATPases have 2 components, CF(1) - the catalytic core - and CF(0) - the membrane proton channel. CF(1) has five subunits: alpha(3), beta(3), gamma(1), delta(1), epsilon(1). CF(0) has four main subunits: a, b, b' and c.

The protein resides in the plastid. It localises to the chloroplast thylakoid membrane. The enzyme catalyses ATP + H2O + 4 H(+)(in) = ADP + phosphate + 5 H(+)(out). Its function is as follows. Produces ATP from ADP in the presence of a proton gradient across the membrane. The alpha chain is a regulatory subunit. The polypeptide is ATP synthase subunit alpha, chloroplastic (Antithamnion sp. (Red alga)).